A 343-amino-acid polypeptide reads, in one-letter code: Serpentine receptor class alpha-11 (343 aa).

The Extracellular portion of the chain corresponds to 1-24 (MSSPDTPVCASPQQMEMYNSHFYT). A helical membrane pass occupies residues 25-45 (CALFFNLLIAFTSMTLIIMAI). Residues 46 to 60 (RKLLTESIINTSTRM) are Cytoplasmic-facing. Residues 61-81 (FLIVGLLCCSLHQTAYIVLRV) traverse the membrane as a helical segment. Over 82-106 (QVIFQILFKLDQPCKLYYKAYDCKY) the chain is Extracellular. The chain crosses the membrane as a helical span at residues 107–127 (VTFSLVAGNTGMIFIQSAMTI). The Cytoplasmic segment spans residues 128–146 (DRILTTVFTNLWPKLKYWP). Residues 147–167 (GVILSSFMIGCNFTNVQFIFW) traverse the membrane as a helical segment. The Extracellular segment spans residues 168–192 (NDPLTDYVPTCGQFPPKSVGRFQKF). The helical transmembrane segment at 193–213 (LEIALYMSLAHMVINVIILYI) threads the bilayer. The Cytoplasmic portion of the chain corresponds to 214 to 247 (NVVQDRRQRLVSTHDQSQSFDVNQRFQSRVALKS). A helical membrane pass occupies residues 248–268 (TQAIFFLSMSQFLSCFLYTIF). Residues 269 to 291 (TKLYLTLQPDMTPLQSGLTLALT) are Extracellular-facing. The chain crosses the membrane as a helical span at residues 292-312 (YTTPYACIAIPSLIMVTLTFI). The Cytoplasmic portion of the chain corresponds to 313–343 (RNQRHRSINALRSQTETGDQYMQKIKKIWDK).

Belongs to the nematode receptor-like protein sra family.

The protein resides in the membrane. Functionally, a G protein-coupled receptor required for olfactory imprinting a requisite in ordorant response such as benzaldehyde and isoamylalcohol. This Caenorhabditis briggsae protein is Serpentine receptor class alpha-11.